The primary structure comprises 100 residues: Large ribosomal subunit protein uL23 (100 aa).

It belongs to the universal ribosomal protein uL23 family. In terms of assembly, part of the 50S ribosomal subunit. Contacts protein L29, and trigger factor when it is bound to the ribosome.

Its function is as follows. One of the early assembly proteins it binds 23S rRNA. One of the proteins that surrounds the polypeptide exit tunnel on the outside of the ribosome. Forms the main docking site for trigger factor binding to the ribosome. The protein is Large ribosomal subunit protein uL23 of Shewanella piezotolerans (strain WP3 / JCM 13877).